The sequence spans 351 residues: Heme A synthase (351 aa).

The next 8 membrane-spanning stretches (helical) occupy residues 17–37 (WLILMALMVYAIILVGGATRL), 103–123 (LIGLVAVAGFAFFAWRRWLGQ), 129–149 (LVGLIALGGLQGAIGWWMVSS), 164–184 (LMTHFTLALLILAVIAWLWLD), 201–221 (AMALMGLIFVQMAAGALVAGL), 261–281 (FNHRLLAYGLWAGSLAAAWAF), 289–309 (EFAFLAVLVSAQAVWGILTLV), and 316–336 (LALVHQGLGVVTTLWAVYTVW). H263 is a heme binding site. H320 is a heme binding site.

Belongs to the COX15/CtaA family. Type 2 subfamily. Interacts with CtaB. Heme b is required as a cofactor.

The protein resides in the cell membrane. It catalyses the reaction Fe(II)-heme o + 2 A + H2O = Fe(II)-heme a + 2 AH2. It functions in the pathway porphyrin-containing compound metabolism; heme A biosynthesis; heme A from heme O: step 1/1. In terms of biological role, catalyzes the conversion of heme O to heme A by two successive hydroxylations of the methyl group at C8. The first hydroxylation forms heme I, the second hydroxylation results in an unstable dihydroxymethyl group, which spontaneously dehydrates, resulting in the formyl group of heme A. The protein is Heme A synthase of Hyphomonas neptunium (strain ATCC 15444).